A 418-amino-acid chain; its full sequence is Serine hydroxymethyltransferase (418 aa).

(6S)-5,6,7,8-tetrahydrofolate-binding positions include Leu121 and 125–127 (GHL). N6-(pyridoxal phosphate)lysine is present on Lys230. A (6S)-5,6,7,8-tetrahydrofolate-binding site is contributed by 356-358 (SPF).

The protein belongs to the SHMT family. Homodimer. Pyridoxal 5'-phosphate serves as cofactor.

The protein localises to the cytoplasm. The enzyme catalyses (6R)-5,10-methylene-5,6,7,8-tetrahydrofolate + glycine + H2O = (6S)-5,6,7,8-tetrahydrofolate + L-serine. Its pathway is one-carbon metabolism; tetrahydrofolate interconversion. It functions in the pathway amino-acid biosynthesis; glycine biosynthesis; glycine from L-serine: step 1/1. Its function is as follows. Catalyzes the reversible interconversion of serine and glycine with tetrahydrofolate (THF) serving as the one-carbon carrier. This reaction serves as the major source of one-carbon groups required for the biosynthesis of purines, thymidylate, methionine, and other important biomolecules. Also exhibits THF-independent aldolase activity toward beta-hydroxyamino acids, producing glycine and aldehydes, via a retro-aldol mechanism. In Shewanella pealeana (strain ATCC 700345 / ANG-SQ1), this protein is Serine hydroxymethyltransferase.